The sequence spans 248 residues: Type III pantothenate kinase (248 aa).

6 to 13 (DCGNSLIK) contacts ATP. Substrate contacts are provided by residues Y92 and 99–102 (GLDR). D101 serves as the catalytic Proton acceptor. D121 provides a ligand contact to K(+). T124 lines the ATP pocket. T180 serves as a coordination point for substrate.

This sequence belongs to the type III pantothenate kinase family. In terms of assembly, homodimer. NH4(+) is required as a cofactor. K(+) serves as cofactor.

The protein resides in the cytoplasm. It catalyses the reaction (R)-pantothenate + ATP = (R)-4'-phosphopantothenate + ADP + H(+). It functions in the pathway cofactor biosynthesis; coenzyme A biosynthesis; CoA from (R)-pantothenate: step 1/5. Functionally, catalyzes the phosphorylation of pantothenate (Pan), the first step in CoA biosynthesis. The chain is Type III pantothenate kinase from Pseudomonas aeruginosa (strain LESB58).